Consider the following 246-residue polypeptide: UDP-N-acetyl-D-mannosaminuronic acid transferase (246 aa).

Belongs to the glycosyltransferase 26 family.

It catalyses the reaction UDP-N-acetyl-alpha-D-mannosaminouronate + N-acetyl-alpha-D-glucosaminyl-di-trans,octa-cis-undecaprenyl diphosphate = beta-D-ManNAcA-(1-&gt;4)-alpha-D-GlcNAc-di-trans,octa-cis-undecaprenyl diphosphate + UDP + H(+). It functions in the pathway bacterial outer membrane biogenesis; enterobacterial common antigen biosynthesis. Its function is as follows. Catalyzes the synthesis of Und-PP-GlcNAc-ManNAcA (Lipid II), the second lipid-linked intermediate involved in enterobacterial common antigen (ECA) synthesis. The protein is UDP-N-acetyl-D-mannosaminuronic acid transferase of Escherichia coli O127:H6 (strain E2348/69 / EPEC).